Consider the following 90-residue polypeptide: Protein LIM3 (90 aa).

The signal sequence occupies residues 1 to 26 (MAAVKFLVCSVLLVVLATQSEIGLAQ). 4 disulfides stabilise this stretch: Cys28–Cys65, Cys38–Cys54, Cys55–Cys80, and Cys67–Cys87.

Belongs to the A9/FIL1 family.

It localises to the secreted. This chain is Protein LIM3 (LIM3), found in Lilium longiflorum (Trumpet lily).